A 660-amino-acid polypeptide reads, in one-letter code: Threonine--tRNA ligase (660 aa).

Residues 1 to 49 (MPINEIRVQKGQRYRDAINDKKVIAVKKGDKFLDLDEIAGEDEAVQPVY) enclose the TGS domain. Positions 225 to 554 (DHRKIIAEMD…LLEHFAGKLP (330 aa)) are catalytic. Residues Cys-318, His-369, and His-531 each contribute to the Zn(2+) site.

The protein belongs to the class-II aminoacyl-tRNA synthetase family. In terms of assembly, homodimer. Zn(2+) serves as cofactor.

The protein resides in the cytoplasm. It catalyses the reaction tRNA(Thr) + L-threonine + ATP = L-threonyl-tRNA(Thr) + AMP + diphosphate + H(+). Functionally, catalyzes the attachment of threonine to tRNA(Thr) in a two-step reaction: L-threonine is first activated by ATP to form Thr-AMP and then transferred to the acceptor end of tRNA(Thr). The sequence is that of Threonine--tRNA ligase from Thermoplasma volcanium (strain ATCC 51530 / DSM 4299 / JCM 9571 / NBRC 15438 / GSS1).